A 917-amino-acid polypeptide reads, in one-letter code: Major intrinsically disordered Notch2-binding receptor 1 (917 aa).

The Cytoplasmic segment spans residues 1 to 892 (MEANQEASLF…AEFRRAKVCK (892 aa)). 7 disordered regions span residues 337-367 (STYF…WPAK), 389-410 (SEEK…GPDR), 457-476 (DKSI…SVGT), 568-588 (ITNG…NVHH), 652-679 (SEAP…LENS), 706-727 (TRPS…IASI), and 746-783 (NEEE…LPKQ). A compositionally biased stretch (polar residues) spans 460–476 (ISCTSGQHSSDTSSVGT). A compositionally biased stretch (basic and acidic residues) spans 576 to 588 (KGDKCNRPENVHH). A Phosphoserine modification is found at Ser-712. A helical transmembrane segment spans residues 893–913 (IAALITAAACTVILVIVVPIC). Over 914–917 (TMKS) the chain is Extracellular.

The protein belongs to the MINAR family. In terms of assembly, interacts with NOTCH2; this interaction increases MINAR1 stability. Interacts (via N-terminus) with DEPTOR (via PDZ domain); this interaction may stabilize DEPTOR protein by impairing its ubiquitination.

Its subcellular location is the cell membrane. In terms of biological role, intrinsically disordered protein which may negatively regulate mTOR signaling pathway by stabilizing the mTOR complex component DEPTOR. Negatively regulates angiogenesis. Negatively regulates cell growth. Negatively regulates neurite outgrowth in hippocampal neurons. The protein is Major intrinsically disordered Notch2-binding receptor 1 (Minar1) of Rattus norvegicus (Rat).